The sequence spans 588 residues: Arginine--tRNA ligase (588 aa).

Positions 124-134 match the 'HIGH' region motif; that stretch reads PNVAKPMHVGH.

The protein belongs to the class-I aminoacyl-tRNA synthetase family. As to quaternary structure, monomer.

The protein localises to the cytoplasm. It carries out the reaction tRNA(Arg) + L-arginine + ATP = L-arginyl-tRNA(Arg) + AMP + diphosphate. This chain is Arginine--tRNA ligase, found in Maricaulis maris (strain MCS10) (Caulobacter maris).